The chain runs to 248 residues: Ureidoacrylate amidohydrolase RutB (248 aa).

Catalysis depends on D41, which acts as the Proton acceptor. Residue K150 is part of the active site. The Nucleophile role is filled by C183.

This sequence belongs to the isochorismatase family. RutB subfamily.

It catalyses the reaction (Z)-3-ureidoacrylate + H2O + H(+) = (Z)-3-aminoacrylate + NH4(+) + CO2. The enzyme catalyses (Z)-3-ureidoacrylate + H2O = (Z)-3-aminoacrylate + carbamate + H(+). It carries out the reaction (Z)-2-methylureidoacrylate + H2O + H(+) = (Z)-2-methylaminoacrylate + NH4(+) + CO2. Its function is as follows. Hydrolyzes ureidoacrylate to form aminoacrylate and carbamate. The carbamate hydrolyzes spontaneously, thereby releasing one of the nitrogen atoms of the pyrimidine ring as ammonia and one of its carbon atoms as CO2. The chain is Ureidoacrylate amidohydrolase RutB from Methylorubrum extorquens (strain ATCC 14718 / DSM 1338 / JCM 2805 / NCIMB 9133 / AM1) (Methylobacterium extorquens).